The sequence spans 89 residues: Small ribosomal subunit protein uS15 (89 aa).

This sequence belongs to the universal ribosomal protein uS15 family. In terms of assembly, part of the 30S ribosomal subunit. Forms a bridge to the 50S subunit in the 70S ribosome, contacting the 23S rRNA.

One of the primary rRNA binding proteins, it binds directly to 16S rRNA where it helps nucleate assembly of the platform of the 30S subunit by binding and bridging several RNA helices of the 16S rRNA. Its function is as follows. Forms an intersubunit bridge (bridge B4) with the 23S rRNA of the 50S subunit in the ribosome. The sequence is that of Small ribosomal subunit protein uS15 from Serratia proteamaculans (strain 568).